We begin with the raw amino-acid sequence, 324 residues long: NADH-ubiquinone oxidoreductase chain 1 (324 aa).

8 helical membrane passes run 9–29 (LINP…LTLV), 75–95 (ILFL…WAPM), 106–126 (LGIL…LGSG), 146–166 (ISYE…SGGY), 178–198 (TWLL…TLAE), 212–232 (ELVS…FFLA), 259–279 (ELMT…FLWM), and 299–319 (FLPI…ALAG).

Belongs to the complex I subunit 1 family. As to quaternary structure, core subunit of respiratory chain NADH dehydrogenase (Complex I) which is composed of 45 different subunits.

The protein resides in the mitochondrion inner membrane. The catalysed reaction is a ubiquinone + NADH + 5 H(+)(in) = a ubiquinol + NAD(+) + 4 H(+)(out). Its function is as follows. Core subunit of the mitochondrial membrane respiratory chain NADH dehydrogenase (Complex I) which catalyzes electron transfer from NADH through the respiratory chain, using ubiquinone as an electron acceptor. Essential for the catalytic activity and assembly of complex I. This Danio rerio (Zebrafish) protein is NADH-ubiquinone oxidoreductase chain 1 (mt-nd1).